The sequence spans 415 residues: Gamma-glutamyl phosphate reductase (415 aa).

It belongs to the gamma-glutamyl phosphate reductase family.

It is found in the cytoplasm. The enzyme catalyses L-glutamate 5-semialdehyde + phosphate + NADP(+) = L-glutamyl 5-phosphate + NADPH + H(+). It participates in amino-acid biosynthesis; L-proline biosynthesis; L-glutamate 5-semialdehyde from L-glutamate: step 2/2. In terms of biological role, catalyzes the NADPH-dependent reduction of L-glutamate 5-phosphate into L-glutamate 5-semialdehyde and phosphate. The product spontaneously undergoes cyclization to form 1-pyrroline-5-carboxylate. The protein is Gamma-glutamyl phosphate reductase of Bacillus thuringiensis subsp. konkukian (strain 97-27).